The primary structure comprises 396 residues: Elongation factor Tu (396 aa).

Residues 10–206 enclose the tr-type G domain; it reads KPHVNVGTIG…ALDTYIPTPE (197 aa). A G1 region spans residues 19-26; sequence GHVDHGKT. A GTP-binding site is contributed by 19-26; sequence GHVDHGKT. Residue T26 coordinates Mg(2+). The segment at 60–64 is G2; the sequence is GITIN. Residues 81 to 84 form a G3 region; the sequence is DCPG. GTP is bound by residues 81-85 and 136-139; these read DCPGH and NKCD. The segment at 136-139 is G4; sequence NKCD. Residues 174–176 are G5; sequence SAK.

This sequence belongs to the TRAFAC class translation factor GTPase superfamily. Classic translation factor GTPase family. EF-Tu/EF-1A subfamily. Monomer.

Its subcellular location is the cytoplasm. It catalyses the reaction GTP + H2O = GDP + phosphate + H(+). Functionally, GTP hydrolase that promotes the GTP-dependent binding of aminoacyl-tRNA to the A-site of ribosomes during protein biosynthesis. In Burkholderia mallei (strain NCTC 10247), this protein is Elongation factor Tu.